The chain runs to 349 residues: Hydroxymethylglutaryl-CoA synthase (349 aa).

2 residues coordinate (3S)-3-hydroxy-3-methylglutaryl-CoA: D29 and A30. Catalysis depends on E81, which acts as the Proton donor/acceptor. The (3S)-3-hydroxy-3-methylglutaryl-CoA site is built by C113 and T154. The active-site Acyl-thioester intermediate is C113. Position 202 (R202) interacts with CoA. (3S)-3-hydroxy-3-methylglutaryl-CoA contacts are provided by T204 and H237. The Proton donor/acceptor role is filled by H237. Residue K242 participates in CoA binding. The (3S)-3-hydroxy-3-methylglutaryl-CoA site is built by K246, N269, and S299.

The protein belongs to the thiolase-like superfamily. Archaeal HMG-CoA synthase family. Interacts with acetoacetyl-CoA thiolase that catalyzes the precedent step in the pathway and with a DUF35 protein. The acetoacetyl-CoA thiolase/HMG-CoA synthase complex channels the intermediate via a fused CoA-binding site, which allows for efficient coupling of the endergonic thiolase reaction with the exergonic HMGCS reaction.

It catalyses the reaction acetoacetyl-CoA + acetyl-CoA + H2O = (3S)-3-hydroxy-3-methylglutaryl-CoA + CoA + H(+). Its pathway is metabolic intermediate biosynthesis; (R)-mevalonate biosynthesis; (R)-mevalonate from acetyl-CoA: step 2/3. Functionally, catalyzes the condensation of acetyl-CoA with acetoacetyl-CoA to form 3-hydroxy-3-methylglutaryl-CoA (HMG-CoA). Functions in the mevalonate (MVA) pathway leading to isopentenyl diphosphate (IPP), a key precursor for the biosynthesis of isoprenoid compounds that are building blocks of archaeal membrane lipids. The chain is Hydroxymethylglutaryl-CoA synthase from Methanosarcina barkeri (strain Fusaro / DSM 804).